Consider the following 151-residue polypeptide: Large-conductance mechanosensitive channel (151 aa).

Helical transmembrane passes span valine 14 to leucine 34, valine 38 to isoleucine 58, and glycine 86 to valine 106.

This sequence belongs to the MscL family. As to quaternary structure, homopentamer.

Its subcellular location is the cell inner membrane. Channel that opens in response to stretch forces in the membrane lipid bilayer. May participate in the regulation of osmotic pressure changes within the cell. This is Large-conductance mechanosensitive channel from Pelodictyon phaeoclathratiforme (strain DSM 5477 / BU-1).